Reading from the N-terminus, the 122-residue chain is Large ribosomal subunit protein uL14 (122 aa).

It belongs to the universal ribosomal protein uL14 family. In terms of assembly, part of the 50S ribosomal subunit. Forms a cluster with proteins L3 and L19. In the 70S ribosome, L14 and L19 interact and together make contacts with the 16S rRNA in bridges B5 and B8.

Binds to 23S rRNA. Forms part of two intersubunit bridges in the 70S ribosome. The sequence is that of Large ribosomal subunit protein uL14 from Chlamydia pneumoniae (Chlamydophila pneumoniae).